The following is a 365-amino-acid chain: Adenosine deaminase (365 aa).

Residues His-19 and His-21 each contribute to the Zn(2+) site. Residues His-21, Asp-23, and Gly-181 each contribute to the substrate site. Position 208 (His-208) interacts with Zn(2+). Residue Glu-211 is the Proton donor of the active site. Asp-300 is a Zn(2+) binding site.

This sequence belongs to the metallo-dependent hydrolases superfamily. Adenosine and AMP deaminases family. Adenosine deaminase subfamily. The cofactor is Zn(2+).

The enzyme catalyses adenosine + H2O + H(+) = inosine + NH4(+). It carries out the reaction 2'-deoxyadenosine + H2O + H(+) = 2'-deoxyinosine + NH4(+). Catalyzes the hydrolytic deamination of adenosine and 2-deoxyadenosine. The sequence is that of Adenosine deaminase from Mycobacterium tuberculosis (strain ATCC 25177 / H37Ra).